A 114-amino-acid polypeptide reads, in one-letter code: MSLLSSRAARVPGPSSSLCALLVLLLLLTQPGPIASAGPAAAVLRELRCVCLQTTQGVHPKMISNLQVFAIGPQCSKVEVVASLKNGKEICLDPEAPFLKKVIQKILDGGNKEN.

An N-terminal signal peptide occupies residues 1 to 36; that stretch reads MSLLSSRAARVPGPSSSLCALLVLLLLLTQPGPIAS. Cystine bridges form between Cys-49-Cys-75 and Cys-51-Cys-91.

Belongs to the intercrine alpha (chemokine CxC) family. Monomer. Homodimer. N-terminal processed forms ENA-78(8-78) and ENA-78(9-78) are produced by proteolytic cleavage after secretion from peripheral blood monocytes.

The protein localises to the secreted. In terms of biological role, involved in neutrophil activation. In vitro, ENA-78(8-78) and ENA-78(9-78) show a threefold higher chemotactic activity for neutrophil granulocytes. The chain is C-X-C motif chemokine 5 (CXCL5) from Homo sapiens (Human).